The chain runs to 341 residues: Retinol dehydrogenase 10-A (341 aa).

A helical; Signal-anchor transmembrane segment spans residues 3–23; that stretch reads IVLEFFLVTFRVLWAFVLAAG. Residue 40 to 64 coordinates NADP(+); sequence LITGAGSGLGRLFALEFARRRAQLV. Ser197 provides a ligand contact to substrate. Tyr210 acts as the Proton acceptor in catalysis.

Belongs to the short-chain dehydrogenases/reductases (SDR) family.

Its subcellular location is the microsome membrane. It is found in the endoplasmic reticulum membrane. It catalyses the reaction all-trans-retinol + NADP(+) = all-trans-retinal + NADPH + H(+). It functions in the pathway cofactor metabolism; retinol metabolism. In terms of biological role, retinol dehydrogenase with a clear preference for NADP. Converts all-trans-retinol to all-trans-retinal. Has no detectable activity towards 11-cis-retinol, 9-cis-retinol and 13-cis-retinol. This Xenopus laevis (African clawed frog) protein is Retinol dehydrogenase 10-A (rdh10-a).